The following is a 235-amino-acid chain: Uridylate kinase (235 aa).

ATP is bound at residue 9–12 (KISG). A UMP-binding site is contributed by G50. Residues G51 and R55 each coordinate ATP. UMP is bound by residues D70 and 131 to 138 (TGFPYFTT). ATP contacts are provided by N159, Y165, and D168.

Belongs to the UMP kinase family. Homohexamer; trimer of dimers.

The protein localises to the cytoplasm. The enzyme catalyses UMP + ATP = UDP + ADP. Its pathway is pyrimidine metabolism; CTP biosynthesis via de novo pathway; UDP from UMP (UMPK route): step 1/1. With respect to regulation, unlike other bacteria, is not activated by GTP. UTP is a competitive inhibitor against UMP and a non-competitive inhibitor toward ATP. Functionally, catalyzes the reversible phosphorylation of UMP to UDP, with ATP as the most efficient phosphate donor. Is also able to phosphorylate dUMP. The polypeptide is Uridylate kinase (pyrH) (Ureaplasma parvum serovar 3 (strain ATCC 700970)).